A 599-amino-acid chain; its full sequence is Dual specificity tyrosine-phosphorylation-regulated kinase 2 (599 aa).

Positions 1 to 55 (MLTRKPSAAAPAAYPTGRGGDTAVRQLQASPGIGAGAPRSGVGTGPPSPIALPPL) are disordered. A Phosphoserine modification is found at serine 30. Phosphothreonine; by ATM is present on threonine 104. The Nuclear localization signal signature appears at 187–189 (KKR). Residues 220–533 (YEVLKVIGKG…PGQALRHPWL (314 aa)) form the Protein kinase domain. Residues 226-234 (IGKGSFGQV), lysine 249, and 299-302 (FELL) contribute to the ATP site. Aspartate 346 functions as the Proton acceptor in the catalytic mechanism. Threonine 379 carries the phosphothreonine; by MAP3K10 modification. Position 380 is a phosphotyrosine; by autocatalysis (tyrosine 380). A Phosphoserine; by ATM modification is found at serine 440. The residue at position 447 (serine 447) is a Phosphoserine; by MAP3K10.

The protein belongs to the protein kinase superfamily. CMGC Ser/Thr protein kinase family. MNB/DYRK subfamily. As to quaternary structure, component of an E3 ligase complex containing DYRK2, EDD/UBR5, DDB1 and DCAF1 (EDVP complex). Interacts directly with EDD/UBR5, DDB1 and DCAF1. Interacts with SIAH2 and MDM2. Interacts with MAP3K10 and NFATC1. May also interact with CCNL2. Mg(2+) is required as a cofactor. Mn(2+) serves as cofactor. Post-translationally, autophosphorylates cotranslationally on the second tyrosine residue in the Tyr-X-Tyr motif in the activation loop, but once mature, does not have any protein tyrosine kinase activity. Phosphorylated at Thr-104 and Ser-440 by ATM in response to genotoxic stress. In terms of processing, under normal conditions, polyubiquitinated in the nucleus by MDM2, leading to its proteasomal degradation. Phosphorylation on Thr-104 and Ser-440 by ATM in response to genotoxic stress disrupts MDM2 binding and prevents MDM2-mediated ubiquitination and subsequent proteasomal degradation. Polyubiquitinated by SIAH2, leading to its proteasomal degradation. Polyubiquitinated by SIAH2 occurs under normal conditions, and is enhanced in response to hypoxia.

The protein resides in the cytoplasm. The protein localises to the nucleus. The enzyme catalyses L-seryl-[protein] + ATP = O-phospho-L-seryl-[protein] + ADP + H(+). It catalyses the reaction L-threonyl-[protein] + ATP = O-phospho-L-threonyl-[protein] + ADP + H(+). It carries out the reaction L-tyrosyl-[protein] + ATP = O-phospho-L-tyrosyl-[protein] + ADP + H(+). Activated by autophosphorylation on the second tyrosine residue in the Tyr-X-Tyr motif in the activation loop. Functionally, serine/threonine-protein kinase involved in the regulation of the mitotic cell cycle, cell proliferation, apoptosis, organization of the cytoskeleton and neurite outgrowth. Functions in part via its role in ubiquitin-dependent proteasomal protein degradation. Functions downstream of ATM and phosphorylates p53/TP53 at 'Ser-46', and thereby contributes to the induction of apoptosis in response to DNA damage. Phosphorylates NFATC1, and thereby inhibits its accumulation in the nucleus and its transcription factor activity. Phosphorylates EIF2B5 at 'Ser-544', enabling its subsequent phosphorylation and inhibition by GSK3B. Likewise, phosphorylation of NFATC1, CRMP2/DPYSL2 and CRMP4/DPYSL3 promotes their subsequent phosphorylation by GSK3B. May play a general role in the priming of GSK3 substrates. Inactivates GYS1 by phosphorylation at 'Ser-641', and potentially also a second phosphorylation site, thus regulating glycogen synthesis. Mediates EDVP E3 ligase complex formation and is required for the phosphorylation and subsequent degradation of KATNA1. Phosphorylates TERT at 'Ser-457', promoting TERT ubiquitination by the EDVP complex. Phosphorylates SIAH2, and thereby increases its ubiquitin ligase activity. Promotes the proteasomal degradation of MYC and JUN, and thereby regulates progress through the mitotic cell cycle and cell proliferation. Promotes proteasomal degradation of GLI2 and GLI3, and thereby plays a role in smoothened and sonic hedgehog signaling. Phosphorylates CRMP2/DPYSL2, CRMP4/DPYSL3, DCX, EIF2B5, EIF4EBP1, GLI2, GLI3, GYS1, JUN, MDM2, MYC, NFATC1, p53/TP53, TAU/MAPT and KATNA1. Can phosphorylate histone H1, histone H3 and histone H2B (in vitro). Can phosphorylate CARHSP1 (in vitro). Plays a role in cytoskeleton organization and neurite outgrowth via its phosphorylation of DCX. The chain is Dual specificity tyrosine-phosphorylation-regulated kinase 2 from Mus musculus (Mouse).